Consider the following 268-residue polypeptide: 4-hydroxy-tetrahydrodipicolinate reductase (268 aa).

Residues 10 to 15 (GASGRM), Asp36, 99 to 101 (GTT), and 123 to 126 (APNM) each bind NAD(+). The active-site Proton donor/acceptor is the His156. His157 serves as a coordination point for (S)-2,3,4,5-tetrahydrodipicolinate. Lys160 serves as the catalytic Proton donor. 166–167 (GT) is a (S)-2,3,4,5-tetrahydrodipicolinate binding site.

It belongs to the DapB family.

It localises to the cytoplasm. The catalysed reaction is (S)-2,3,4,5-tetrahydrodipicolinate + NAD(+) + H2O = (2S,4S)-4-hydroxy-2,3,4,5-tetrahydrodipicolinate + NADH + H(+). It carries out the reaction (S)-2,3,4,5-tetrahydrodipicolinate + NADP(+) + H2O = (2S,4S)-4-hydroxy-2,3,4,5-tetrahydrodipicolinate + NADPH + H(+). It participates in amino-acid biosynthesis; L-lysine biosynthesis via DAP pathway; (S)-tetrahydrodipicolinate from L-aspartate: step 4/4. Its function is as follows. Catalyzes the conversion of 4-hydroxy-tetrahydrodipicolinate (HTPA) to tetrahydrodipicolinate. The polypeptide is 4-hydroxy-tetrahydrodipicolinate reductase (Janthinobacterium sp. (strain Marseille) (Minibacterium massiliensis)).